A 152-amino-acid chain; its full sequence is UPF0756 membrane protein PEPE_1090 (152 aa).

Helical transmembrane passes span 4 to 24, 52 to 72, 85 to 105, and 115 to 135; these read WLFL…SLII, WGVT…KIGF, WIAV…VGFL, and LVMG…GPII.

The protein belongs to the UPF0756 family.

It localises to the cell membrane. This is UPF0756 membrane protein PEPE_1090 from Pediococcus pentosaceus (strain ATCC 25745 / CCUG 21536 / LMG 10740 / 183-1w).